The sequence spans 261 residues: Guanine nucleotide exchange factor BopE (261 aa).

This sequence belongs to the GEF (guanine exchange factor) SopE family. As to quaternary structure, monomer. Interacts with human CDC42.

It localises to the secreted. Its function is as follows. Activator for both CDC42 and RAC1 by directly interacting with these Rho GTPases and acting as a guanine nucleotide exchange factor (GEF). This activation results in actin cytoskeleton rearrangements and stimulates membrane ruffling, thus promoting bacterial entry into non-phagocytic cells. This Burkholderia mallei (strain NCTC 10247) protein is Guanine nucleotide exchange factor BopE (bopE).